Consider the following 300-residue polypeptide: Protein SPEAR4 (300 aa).

Positions M1–Y10 are enriched in polar residues. The tract at residues M1–A45 is disordered. Over residues K25–R39 the composition is skewed to basic residues. Positions R40 to E48 match the SPL motif. The EAR motif lies at I294 to L300.

Interacts with SPL and SPEAR2. In terms of tissue distribution, expressed in leaves.

Its function is as follows. Adapter-like transcriptional repressor recruiting TPL/TPR coepressors to inhibit TCP transcription factors. May be involved in leaf development. This Arabidopsis thaliana (Mouse-ear cress) protein is Protein SPEAR4.